Reading from the N-terminus, the 130-residue chain is Small ribosomal subunit protein uS8B (130 aa).

It belongs to the universal ribosomal protein uS8 family.

The protein is Small ribosomal subunit protein uS8B (RpS15Ab) of Drosophila melanogaster (Fruit fly).